A 429-amino-acid polypeptide reads, in one-letter code: Prenyltransferase okaC (429 aa).

Residues R101, K189, Y191, K257, Y259, Y342, Y406, and Y410 each contribute to the dimethylallyl diphosphate site.

Belongs to the tryptophan dimethylallyltransferase family.

The catalysed reaction is cyclo(L-Trp-L-Trp) + 2 dimethylallyl diphosphate = cyclo(N(8)-(alpha,alpha-dimethylallyl)-L-Trp-6a-(alpha,alpha-dimethylallyl)-L-Trp) + 2 diphosphate. It participates in alkaloid biosynthesis. Functionally, prenyltransferase; part of the gene cluster that mediates the biosynthesis of okaramine B, a prenylated indole alkaloid that possesses an unusual octacyclic ring system, including a four-membered azetidine ring and an eight-membered azocine ring, and that exhibits insecticidal activity against silkworm larvae. Within the pathway, okaC performs asymmetric reverse prenylation of cyclo(L-Trp-L-Trp) at N-1 and C-2' of the indole ring to produce the cyclic prenylated tryptophan dimer cyclo(N8-(alpha,alpha-dimethylallyl)-L-Trp-6a-(alpha,alpha-dime-thylallyl)-L-Trp). The biosynthesis begins with the NRPS okaA that condenses two tryptophan molecules into cyclo(L-Trp-L-Trp). Prenylation by the prenyltransferase okaC then leads to the formation of cyclo(N8-(alpha,alpha-dimethylallyl)-L-Trp-6a-(alpha,alpha-dime-thylallyl)-L-Trp). This is followed by indole 2,3-epoxidation by the FAD-dependent monooxygenase okaB to facilitate the formation of the hexahydropyrrolo[2,3-b]indole (HPI) moiety of okaramine C. The cytochrome P450 monooxygenase okaD then likely catalyzes formation of the eight-membered ring of okaramine A. The dioxygenase okaE further forms the unusual 2-dimethyl-3-methyl-azetidine ring to yield 12-deshydroxyl okaramine E, as well as the hydroxylation of 12-deshydroxyl okaramine E to produce okaramine E. The cytochrome P450 monoxygenase okaG converts 12-deshydroxyl okaramine E into 3-desmethyl okaramine B which is further methylated by the methyltransferase okaF into okaramine B. In a shunt pathway, okaG and okaF together are also able to convert okaramine E into okaramine D. Okaramine H is produced by nonenzymatic conversion from okaramine A. This Penicillium ochrochloron protein is Prenyltransferase okaC.